We begin with the raw amino-acid sequence, 499 residues long: Probable cytosol aminopeptidase (499 aa).

Residues K263 and D268 each contribute to the Mn(2+) site. Residue K275 is part of the active site. The Mn(2+) site is built by D286, D345, and E347. Residue R349 is part of the active site.

The protein belongs to the peptidase M17 family. Mn(2+) is required as a cofactor.

The protein localises to the cytoplasm. The enzyme catalyses Release of an N-terminal amino acid, Xaa-|-Yaa-, in which Xaa is preferably Leu, but may be other amino acids including Pro although not Arg or Lys, and Yaa may be Pro. Amino acid amides and methyl esters are also readily hydrolyzed, but rates on arylamides are exceedingly low.. It carries out the reaction Release of an N-terminal amino acid, preferentially leucine, but not glutamic or aspartic acids.. Presumably involved in the processing and regular turnover of intracellular proteins. Catalyzes the removal of unsubstituted N-terminal amino acids from various peptides. The protein is Probable cytosol aminopeptidase (pepA) of Chlamydia trachomatis serovar D (strain ATCC VR-885 / DSM 19411 / UW-3/Cx).